We begin with the raw amino-acid sequence, 477 residues long: uncharacterized protein (477 aa).

12 helical membrane passes run 31–51 (LLRL…LLGT), 60–80 (LGVP…VAPF), 103–123 (LWFG…SLIL), 130–150 (MGPA…AGVG), 177–197 (LLYV…GWLL), 205–225 (LIRV…IALW), 248–268 (AWGL…VMVG), 291–311 (VGQT…GFIW), 334–354 (IVAF…LFFA), 359–379 (IGLG…MVVV), 384–404 (GIAL…AVFI), and 433–453 (VVYV…GPLV).

Belongs to the PucC family.

The protein localises to the cell membrane. This is an uncharacterized protein from Rhodobacter capsulatus (Rhodopseudomonas capsulata).